The primary structure comprises 147 residues: Large ribosomal subunit protein bL9 (147 aa).

It belongs to the bacterial ribosomal protein bL9 family.

Functionally, binds to the 23S rRNA. The polypeptide is Large ribosomal subunit protein bL9 (Geotalea uraniireducens (strain Rf4) (Geobacter uraniireducens)).